The sequence spans 301 residues: Mitochondrial substrate carrier family protein X (301 aa).

At methionine 1–asparagine 23 the chain is on the mitochondrial intermembrane side. Solcar repeat units follow at residues proline 18–arginine 109, isoleucine 117–asparagine 199, and isoleucine 208–phenylalanine 296. Residues leucine 24–valine 44 form a helical membrane-spanning segment. Residues lysine 45 to glutamate 75 lie on the Mitochondrial matrix side of the membrane. Residues glycine 76–alanine 97 traverse the membrane as a helical segment. Residues leucine 98–glutamate 122 are Mitochondrial intermembrane-facing. Residues valine 123–valine 143 form a helical membrane-spanning segment. Topologically, residues lysine 144–lysine 173 are mitochondrial matrix. A helical transmembrane segment spans residues glycine 174 to glycine 194. At arginine 195 to glutamate 207 the chain is on the mitochondrial intermembrane side. A helical membrane pass occupies residues isoleucine 208–serine 228. At threonine 229–glycine 271 the chain is on the mitochondrial matrix side. Residues valine 272–isoleucine 292 traverse the membrane as a helical segment. The Mitochondrial intermembrane segment spans residues glutamine 293–histidine 301.

This sequence belongs to the mitochondrial carrier (TC 2.A.29) family.

The protein resides in the mitochondrion inner membrane. In terms of biological role, mitochondrial solute carriers shuttle metabolites, nucleotides, and cofactors through the mitochondrial inner membrane. This chain is Mitochondrial substrate carrier family protein X (mcfX), found in Dictyostelium discoideum (Social amoeba).